Reading from the N-terminus, the 417-residue chain is Tyrosine--tRNA ligase (417 aa).

Y39 lines the L-tyrosine pocket. The short motif at 44 to 53 (CTAPSLHVGH) is the 'HIGH' region element. L-tyrosine-binding residues include Y176 and Q180. The short motif at 236 to 240 (KMGKT) is the 'KMSKS' region element. Residue K239 coordinates ATP. Residues 350 to 417 (AGVLALFVKA…KKRHVLLRPA (68 aa)) enclose the S4 RNA-binding domain.

Belongs to the class-I aminoacyl-tRNA synthetase family. TyrS type 1 subfamily. As to quaternary structure, homodimer.

The protein resides in the cytoplasm. The catalysed reaction is tRNA(Tyr) + L-tyrosine + ATP = L-tyrosyl-tRNA(Tyr) + AMP + diphosphate + H(+). Functionally, catalyzes the attachment of tyrosine to tRNA(Tyr) in a two-step reaction: tyrosine is first activated by ATP to form Tyr-AMP and then transferred to the acceptor end of tRNA(Tyr). The polypeptide is Tyrosine--tRNA ligase (Nitrobacter winogradskyi (strain ATCC 25391 / DSM 10237 / CIP 104748 / NCIMB 11846 / Nb-255)).